The chain runs to 130 residues: Anti-adapter protein IraD (130 aa).

This sequence belongs to the GpW/Gp25 family. IraD subfamily. As to quaternary structure, interacts with RssB.

Its subcellular location is the cytoplasm. Its function is as follows. Inhibits RpoS proteolysis by regulating RssB activity, thereby increasing the stability of the sigma stress factor RpoS during oxidative stress. Its effect on RpoS stability is due to its interaction with RssB, which probably blocks the interaction of RssB with RpoS, and the consequent delivery of the RssB-RpoS complex to the ClpXP protein degradation pathway. The protein is Anti-adapter protein IraD of Escherichia coli O9:H4 (strain HS).